The chain runs to 377 residues: Guanine nucleotide-binding protein subunit beta-2 (377 aa).

WD repeat units follow at residues 63-93 (GHTGKVYSLDWTPEKNRIVSASQDGRLIVWN), 105-135 (LPCAWVMTCAFSPSGQSVACGGLDSVCSIFN), 154-185 (GHKGYVSSCQYVPDEDTHVITSSGDQTCVLWD), 202-233 (GHTADVQSVSISSSNPRLFVSGSCDSTARLWD), 246-276 (GHEGDVNTVKFFPDGNRFGTGSDDGTCRLFD), 293-323 (GDIPHVTSMAFSISGRLLFVGYSNGDCYVWD), and 339-369 (SHEGRISCLGLSADGSALCTGSWDTNLKIWA).

The protein belongs to the WD repeat G protein beta family. As to quaternary structure, g proteins are composed of 3 units, alpha, beta and gamma.

In terms of biological role, guanine nucleotide-binding proteins (G proteins) are involved as a modulator or transducer in various transmembrane signaling systems. The beta and gamma chains are required for the GTPase activity, for replacement of GDP by GTP, and for G protein-effector interaction. This is Guanine nucleotide-binding protein subunit beta-2 from Nicotiana tabacum (Common tobacco).